A 407-amino-acid polypeptide reads, in one-letter code: Imidazolonepropionase (407 aa).

Residues His74 and His76 each contribute to the Fe(3+) site. His74 and His76 together coordinate Zn(2+). 4-imidazolone-5-propanoate-binding residues include Arg83, Tyr146, and His179. Tyr146 is an N-formimidoyl-L-glutamate binding site. A Fe(3+)-binding site is contributed by His244. His244 is a Zn(2+) binding site. Residue Gln247 coordinates 4-imidazolone-5-propanoate. Asp319 contacts Fe(3+). Asp319 serves as a coordination point for Zn(2+). Residues Asn321 and Gly323 each contribute to the N-formimidoyl-L-glutamate site. 4-imidazolone-5-propanoate is bound at residue Thr324.

Belongs to the metallo-dependent hydrolases superfamily. HutI family. It depends on Zn(2+) as a cofactor. Fe(3+) is required as a cofactor.

The protein localises to the cytoplasm. The enzyme catalyses 4-imidazolone-5-propanoate + H2O = N-formimidoyl-L-glutamate. Its pathway is amino-acid degradation; L-histidine degradation into L-glutamate; N-formimidoyl-L-glutamate from L-histidine: step 3/3. Its function is as follows. Catalyzes the hydrolytic cleavage of the carbon-nitrogen bond in imidazolone-5-propanoate to yield N-formimidoyl-L-glutamate. It is the third step in the universal histidine degradation pathway. The polypeptide is Imidazolonepropionase (Salmonella paratyphi C (strain RKS4594)).